We begin with the raw amino-acid sequence, 344 residues long: MDVVLEVTDQFMFDYMYAWLLPARPALYDFPDKTNGTAQAFSSWVYEPATKFFSLEPSQAAYQSIWTRDNIYRQALSLFLILWLFGLVTYYVFASLSYIFVFDKKTMEHPKFLKNQVWLEIKQTNAALPVMAFFTFPFLVAEVRGYSLLYDTTAEGPGRWYDFFQFPLFIMFTDFGIYWIHRGLHHPLVYKHLHKPHHKWIMPTPYASHAFHPIDGFAQSIPYHIFPFIFPLQKMAYVGLFVFINFWTIMIHDGEYYANNPVINGAACHSVHHFAFNYNYGQFTTLWDRLGGSYREPDGDMFAKEKKMSTTTWKKQVNEMEKIVKEVEGEDDRLYEPTETKKSK.

The next 3 membrane-spanning stretches (helical) occupy residues 76–96, 123–143, and 160–180; these read LSLF…FASL, QTNA…VAEV, and WYDF…IYWI. The Fatty acid hydroxylase domain occupies 167-292; it reads PLFIMFTDFG…FTTLWDRLGG (126 aa). The Histidine box-1 motif lies at 181 to 185; the sequence is HRGLH. Positions 194–198 match the Histidine box-2 motif; the sequence is HKPHH. A helical membrane pass occupies residues 224-244; sequence HIFPFIFPLQKMAYVGLFVFI. Residues 269-273 carry the Histidine box-3 motif; sequence HSVHH.

Belongs to the sterol desaturase family. Fe cation serves as cofactor.

The protein localises to the endoplasmic reticulum membrane. It carries out the reaction a Delta(7)-sterol + 2 Fe(II)-[cytochrome b5] + O2 + 2 H(+) = a Delta(5),Delta(7)-sterol + 2 Fe(III)-[cytochrome b5] + 2 H2O. It participates in steroid metabolism; ergosterol biosynthesis; ergosterol from zymosterol: step 3/5. Its function is as follows. Catalyzes the introduction of a C-5 double bond in the B ring of ergosterol. May contribute to the regulation of ergosterol biosynthesis. This chain is Probable Delta(7)-sterol 5(6)-desaturase, found in Neurospora crassa (strain ATCC 24698 / 74-OR23-1A / CBS 708.71 / DSM 1257 / FGSC 987).